Consider the following 291-residue polypeptide: Ribose-phosphate pyrophosphokinase (291 aa).

ATP-binding positions include 34–36 (DGE) and 92–93 (RQ). Positions 125 and 165 each coordinate Mg(2+). Residue K188 is part of the active site. Residues R190 and D214 each coordinate D-ribose 5-phosphate.

Belongs to the ribose-phosphate pyrophosphokinase family. Class III (archaeal) subfamily. The cofactor is Mg(2+).

Its subcellular location is the cytoplasm. The catalysed reaction is D-ribose 5-phosphate + ATP = 5-phospho-alpha-D-ribose 1-diphosphate + AMP + H(+). It participates in metabolic intermediate biosynthesis; 5-phospho-alpha-D-ribose 1-diphosphate biosynthesis; 5-phospho-alpha-D-ribose 1-diphosphate from D-ribose 5-phosphate (route I): step 1/1. Functionally, involved in the biosynthesis of the central metabolite phospho-alpha-D-ribosyl-1-pyrophosphate (PRPP) via the transfer of pyrophosphoryl group from ATP to 1-hydroxyl of ribose-5-phosphate (Rib-5-P). This is Ribose-phosphate pyrophosphokinase from Methanopyrus kandleri (strain AV19 / DSM 6324 / JCM 9639 / NBRC 100938).